Reading from the N-terminus, the 240-residue chain is 7-cyano-7-deazaguanine synthase (240 aa).

An ATP-binding site is contributed by 14–24 (FSGGQDSATCL). Zn(2+) is bound by residues Cys202, Cys217, Cys220, and Cys223.

Belongs to the QueC family. Requires Zn(2+) as cofactor.

It carries out the reaction 7-carboxy-7-deazaguanine + NH4(+) + ATP = 7-cyano-7-deazaguanine + ADP + phosphate + H2O + H(+). It functions in the pathway purine metabolism; 7-cyano-7-deazaguanine biosynthesis. Catalyzes the ATP-dependent conversion of 7-carboxy-7-deazaguanine (CDG) to 7-cyano-7-deazaguanine (preQ(0)). This is 7-cyano-7-deazaguanine synthase from Rhodopseudomonas palustris (strain BisB18).